Here is a 162-residue protein sequence, read N- to C-terminus: 2-C-methyl-D-erythritol 2,4-cyclodiphosphate synthase (162 aa).

A divalent metal cation contacts are provided by Asp-10 and His-12. 4-CDP-2-C-methyl-D-erythritol 2-phosphate is bound by residues 10–12 (DVH) and 36–37 (HS). Residue His-44 coordinates a divalent metal cation. Residues 58–60 (DIG), 63–67 (FPDTD), 102–108 (AQAPKMA), 134–137 (TTTE), Phe-141, and Arg-144 contribute to the 4-CDP-2-C-methyl-D-erythritol 2-phosphate site.

This sequence belongs to the IspF family. In terms of assembly, homotrimer. It depends on a divalent metal cation as a cofactor.

It carries out the reaction 4-CDP-2-C-methyl-D-erythritol 2-phosphate = 2-C-methyl-D-erythritol 2,4-cyclic diphosphate + CMP. The protein operates within isoprenoid biosynthesis; isopentenyl diphosphate biosynthesis via DXP pathway; isopentenyl diphosphate from 1-deoxy-D-xylulose 5-phosphate: step 4/6. Functionally, involved in the biosynthesis of isopentenyl diphosphate (IPP) and dimethylallyl diphosphate (DMAPP), two major building blocks of isoprenoid compounds. Catalyzes the conversion of 4-diphosphocytidyl-2-C-methyl-D-erythritol 2-phosphate (CDP-ME2P) to 2-C-methyl-D-erythritol 2,4-cyclodiphosphate (ME-CPP) with a corresponding release of cytidine 5-monophosphate (CMP). This Pseudoalteromonas atlantica (strain T6c / ATCC BAA-1087) protein is 2-C-methyl-D-erythritol 2,4-cyclodiphosphate synthase.